Here is a 181-residue protein sequence, read N- to C-terminus: Probable cobalt-precorrin-6B C(15)-methyltransferase (decarboxylating) (181 aa).

Residues Thr16, 40-44, Asp61, and Ala89 each bind S-adenosyl-L-methionine; that span reads GCGSG.

Belongs to the methyltransferase superfamily. Archaeal-type CbiT family.

The catalysed reaction is Co-precorrin-6B + S-adenosyl-L-methionine = Co-precorrin-7 + S-adenosyl-L-homocysteine + CO2. The protein operates within cofactor biosynthesis; adenosylcobalamin biosynthesis; cob(II)yrinate a,c-diamide from sirohydrochlorin (anaerobic route): step 8/10. Functionally, catalyzes the methylation of C-15 in cobalt-precorrin-6B followed by the decarboxylation of C-12 to form cobalt-precorrin-7. This Methanococcus maripaludis (strain C7 / ATCC BAA-1331) protein is Probable cobalt-precorrin-6B C(15)-methyltransferase (decarboxylating).